Consider the following 285-residue polypeptide: 4-diphosphocytidyl-2-C-methyl-D-erythritol kinase (285 aa).

Lysine 12 is a catalytic residue. ATP is bound at residue 95–105; the sequence is PMGGGVGGGSS. Aspartate 137 is a catalytic residue.

The protein belongs to the GHMP kinase family. IspE subfamily.

The catalysed reaction is 4-CDP-2-C-methyl-D-erythritol + ATP = 4-CDP-2-C-methyl-D-erythritol 2-phosphate + ADP + H(+). It functions in the pathway isoprenoid biosynthesis; isopentenyl diphosphate biosynthesis via DXP pathway; isopentenyl diphosphate from 1-deoxy-D-xylulose 5-phosphate: step 3/6. In terms of biological role, catalyzes the phosphorylation of the position 2 hydroxy group of 4-diphosphocytidyl-2C-methyl-D-erythritol. The chain is 4-diphosphocytidyl-2-C-methyl-D-erythritol kinase from Actinobacillus pleuropneumoniae serotype 7 (strain AP76).